The primary structure comprises 405 residues: Serine/threonine transporter SstT (405 aa).

The next 8 helical transmembrane spans lie at 13–33 (GGSLVLQIFVGIIAGVALAGF), 43–63 (FLGDLFVGALKAIAPVLVFVL), 82–102 (IILLYLVGTFAAALTAVLMSF), 141–161 (ALINANYIGLLAWGVGLGIAL), 185–205 (FVICLAPIGIFGLVAATIAQT), 217–237 (LGVLLGAMAVIAFVVNPLIVF), 298–318 (MAGAAITITVLTLAAVHTLGI), and 339–359 (ASGVAGGSLLLIPLACSLFGI).

It belongs to the dicarboxylate/amino acid:cation symporter (DAACS) (TC 2.A.23) family.

Its subcellular location is the cell inner membrane. It catalyses the reaction L-serine(in) + Na(+)(in) = L-serine(out) + Na(+)(out). The enzyme catalyses L-threonine(in) + Na(+)(in) = L-threonine(out) + Na(+)(out). Involved in the import of serine and threonine into the cell, with the concomitant import of sodium (symport system). This is Serine/threonine transporter SstT from Shewanella amazonensis (strain ATCC BAA-1098 / SB2B).